Here is a 242-residue protein sequence, read N- to C-terminus: NADPH-dependent pterin aldehyde reductase (242 aa).

Thr2 is modified (N-acetylthreonine). NADP(+) is bound at residue 21 to 50 (LITGVSKGLGRALALELAKRGHTVIGCARS). Ser153 is a substrate binding site. The Proton acceptor role is filled by Tyr166. An NADP(+)-binding site is contributed by Lys170.

Belongs to the short-chain dehydrogenases/reductases (SDR) family. As to quaternary structure, homodimer. In terms of tissue distribution, mostly expressed in seeds, and, to a lower extent, in roots, leaves, flowers and siliques.

The protein resides in the cytoplasm. NADPH-dependent pterin aldehyde reductase involved in pterin aldehyde salvage during folate turnover. Catalyzes the reduction of diverse aromatic and aliphatic aldehydes (e.g. acetaldehyde, n-propanal, 1-naphthaldehyde, benzaldehyde, cinnamaldehyde, n-butanal, n-hexanal, n-pentanal, 2-naphthaldehyde, n-octanal, n-nonanal and n-heptanal), in addition to the conversion of pterin-6-aldehyde (PtCHO) to 6-hydroxymethylpterin (PtCH(2)OH), and the conversion of dihydropterin-6-aldehyde (H(2)PtCHO) to 6-hydroxymethyldihydropterin (H(2)PtCH(2)OH). Cannot reduce the pterin ring. In Arabidopsis thaliana (Mouse-ear cress), this protein is NADPH-dependent pterin aldehyde reductase.